Reading from the N-terminus, the 260-residue chain is MIEFKDVWFWYDDGKYVLKSINFRFKGGTLAIVGPNGSGKTTLVKMMNGLLKPKKGDVIIDGINTRDKSVAEMSRLVGYVFQNPDAMFFEENVFKEVAFGPRNLGLSEEEVEKRVRWALREVGLEGFEDRSPLELSGGEKQRLAIACILAMKPKYLVLDEPNTGLDERGLRGLINVIRKLREDNHSIILVTHDMELVLEVADEVLLLKDGEIKFFGPVEDFFKLDLRNFSLVEPEIIKIAKELKLRFVRNVDELIKVIGL.

Residues I2–P234 enclose the ABC transporter domain. Residue G34–T41 coordinates ATP.

The protein belongs to the ABC transporter superfamily.

The protein localises to the cell membrane. Functionally, probably part of an ABC transporter complex. Responsible for energy coupling to the transport system. The sequence is that of Putative ABC transporter ATP-binding protein PYRAB01300 from Pyrococcus abyssi (strain GE5 / Orsay).